The following is a 359-amino-acid chain: Histidinol-phosphate aminotransferase (359 aa).

K217 is modified (N6-(pyridoxal phosphate)lysine).

The protein belongs to the class-II pyridoxal-phosphate-dependent aminotransferase family. Histidinol-phosphate aminotransferase subfamily. Homodimer. Pyridoxal 5'-phosphate serves as cofactor.

It carries out the reaction L-histidinol phosphate + 2-oxoglutarate = 3-(imidazol-4-yl)-2-oxopropyl phosphate + L-glutamate. It functions in the pathway amino-acid biosynthesis; L-histidine biosynthesis; L-histidine from 5-phospho-alpha-D-ribose 1-diphosphate: step 7/9. This is Histidinol-phosphate aminotransferase from Salmonella paratyphi A (strain ATCC 9150 / SARB42).